A 339-amino-acid chain; its full sequence is Phosphate acyltransferase (339 aa).

This sequence belongs to the PlsX family. Homodimer. Probably interacts with PlsY.

It localises to the cytoplasm. It catalyses the reaction a fatty acyl-[ACP] + phosphate = an acyl phosphate + holo-[ACP]. It participates in lipid metabolism; phospholipid metabolism. In terms of biological role, catalyzes the reversible formation of acyl-phosphate (acyl-PO(4)) from acyl-[acyl-carrier-protein] (acyl-ACP). This enzyme utilizes acyl-ACP as fatty acyl donor, but not acyl-CoA. The sequence is that of Phosphate acyltransferase from Helicobacter acinonychis (strain Sheeba).